Reading from the N-terminus, the 340-residue chain is CMP-N-acetylneuraminate-beta-galactosamide-alpha-2,3-sialyltransferase 1 (340 aa).

Residues 1 to 13 (MVTLRKRTLKVLT) lie on the Cytoplasmic side of the membrane. The chain crosses the membrane as a helical; Signal-anchor for type II membrane protein span at residues 14-34 (FLVLFIFLTSFFLNYSHTMVA). Topologically, residues 35-340 (TTWFPKQMVL…INKIRIFKGR (306 aa)) are lumenal. 3 disulfide bridges follow: Cys59-Cys64, Cys61-Cys139, and Cys142-Cys281. A glycan (N-linked (GlcNAc...) asparagine) is linked at Asn79. A substrate-binding site is contributed by Gln105. N-linked (GlcNAc...) asparagine glycosylation is present at Asn114. Residues Asn147 and Asn170 each contribute to the substrate site. An N-linked (GlcNAc...) asparagine glycan is attached at Asn201. Substrate is bound by residues Tyr230, Tyr266, Gly270, Gly290, His299, and His316. Asn323 is a glycosylation site (N-linked (GlcNAc...) asparagine).

This sequence belongs to the glycosyltransferase 29 family. In terms of processing, the soluble form derives from the membrane form by proteolytic processing.

It is found in the golgi apparatus. The protein localises to the golgi stack membrane. It localises to the trans-Golgi network membrane. Its subcellular location is the secreted. It carries out the reaction a beta-D-galactosyl-(1-&gt;3)-N-acetyl-alpha-D-galactosaminyl derivative + CMP-N-acetyl-beta-neuraminate = an N-acetyl-alpha-neuraminyl-(2-&gt;3)-beta-D-galactosyl-(1-&gt;3)-N-acetyl-alpha-D-galactosaminyl derivative + CMP + H(+). The enzyme catalyses a ganglioside GM1 + CMP-N-acetyl-beta-neuraminate = a ganglioside GD1a + CMP + H(+). It catalyses the reaction a ganglioside GM1 (d18:1(4E)) + CMP-N-acetyl-beta-neuraminate = a ganglioside GD1a (d18:1(4E)) + CMP + H(+). The catalysed reaction is ganglioside GM1 (d18:1(4E)/18:0) + CMP-N-acetyl-beta-neuraminate = ganglioside GD1a (18:1(4E)/18:0) + CMP + H(+). It carries out the reaction a ganglioside GA1 + CMP-N-acetyl-beta-neuraminate = a ganglioside GM1b + CMP + H(+). The enzyme catalyses a ganglioside GA1 (d18:1(4E)) + CMP-N-acetyl-beta-neuraminate = a ganglioside GM1b (d18:1(4E)) + CMP + H(+). It catalyses the reaction a ganglioside GD1b + CMP-N-acetyl-beta-neuraminate = a ganglioside GT1b + CMP + H(+). The catalysed reaction is a 3-O-[beta-D-galactosyl-(1-&gt;3)-N-acetyl-alpha-D-galactosaminyl]-L-threonyl-[protein] + CMP-N-acetyl-beta-neuraminate = a 3-O-[N-acetyl-alpha-neuraminyl-(2-&gt;3)-beta-D-galactosyl-(1-&gt;3)-N-acetyl-alpha-D-galactosaminyl]-L-threonyl-[protein] + CMP + H(+). It carries out the reaction a 3-O-[beta-D-galactosyl-(1-&gt;3)-N-acetyl-alpha-D-galactosaminyl]-L-seryl-[protein] + CMP-N-acetyl-beta-neuraminate = 3-O-[N-acetyl-alpha-neuraminyl-(2-&gt;3)-beta-D-galactosyl-(1-&gt;3)-N-acetyl-alpha-D-galactosaminyl]-L-seryl-[protein] + CMP + H(+). The protein operates within protein modification; protein glycosylation. Its pathway is glycolipid biosynthesis. A beta-galactoside alpha2-&gt;3 sialyltransferase involved in terminal sialylation of glycoproteins and glycolipids. Catalyzes the transfer of sialic acid (N-acetyl-neuraminic acid; Neu5Ac) from the nucleotide sugar donor CMP-Neu5Ac onto acceptor Galbeta-(1-&gt;3)-GalNAc-terminated glycoconjugates through an alpha2-3 linkage. Adds sialic acid to the core 1 O-glycan, Galbeta-(1-&gt;3)-GalNAc-O-Ser/Thr, which is a major structure of mucin-type O-glycans. As part of a homeostatic mechanism that regulates CD8-positive T cell numbers, sialylates core 1 O-glycans of T cell glycoproteins, SPN/CD43 and PTPRC/CD45. Prevents premature apoptosis of thymic CD8-positive T cells prior to peripheral emigration, whereas in the secondary lymphoid organs controls the survival of CD8-positive memory T cells generated following a successful immune response. Transfers sialic acid to asialofetuin, presumably onto Galbeta-(1-&gt;3)-GalNAc-O-Ser. Sialylates GM1a, GA1 and GD1b gangliosides to form GD1a, GM1b and GT1b, respectively. In Pan troglodytes (Chimpanzee), this protein is CMP-N-acetylneuraminate-beta-galactosamide-alpha-2,3-sialyltransferase 1 (ST3GAL1).